Reading from the N-terminus, the 264-residue chain is Small ribosomal subunit protein uS2 (264 aa).

Belongs to the universal ribosomal protein uS2 family.

The chain is Small ribosomal subunit protein uS2 from Helicobacter pylori (strain P12).